A 556-amino-acid polypeptide reads, in one-letter code: Formate--tetrahydrofolate ligase 1 (556 aa).

Residue 65–72 (TPAGEGKT) participates in ATP binding.

The protein belongs to the formate--tetrahydrofolate ligase family.

It carries out the reaction (6S)-5,6,7,8-tetrahydrofolate + formate + ATP = (6R)-10-formyltetrahydrofolate + ADP + phosphate. It functions in the pathway one-carbon metabolism; tetrahydrofolate interconversion. This is Formate--tetrahydrofolate ligase 1 from Desulfitobacterium hafniense (strain Y51).